A 120-amino-acid chain; its full sequence is MKKQRLEGIGKEIMRVISKVLLEEVKNPKIKGLVSVTEVDVTEDLKFADTYFSILPPLKSDEKKYDHEEILEALNEIKGFLRKRVAEEVDIRYTPEIRVKLDNSMENAIKITKLLNDLKV.

This sequence belongs to the RbfA family. As to quaternary structure, monomer. Binds 30S ribosomal subunits, but not 50S ribosomal subunits or 70S ribosomes.

Its subcellular location is the cytoplasm. In terms of biological role, one of several proteins that assist in the late maturation steps of the functional core of the 30S ribosomal subunit. Associates with free 30S ribosomal subunits (but not with 30S subunits that are part of 70S ribosomes or polysomes). Required for efficient processing of 16S rRNA. May interact with the 5'-terminal helix region of 16S rRNA. The sequence is that of Ribosome-binding factor A from Fusobacterium nucleatum subsp. nucleatum (strain ATCC 25586 / DSM 15643 / BCRC 10681 / CIP 101130 / JCM 8532 / KCTC 2640 / LMG 13131 / VPI 4355).